Here is a 311-residue protein sequence, read N- to C-terminus: Dof zinc finger protein DOF1.4 (311 aa).

The segment covering Met1–His12 has biased composition (polar residues). The interval Met1 to Cys29 is disordered. The span at Gln13–Gln26 shows a compositional bias: low complexity. The segment at Leu27–Arg81 adopts a Dof-type zinc-finger fold. Zn(2+)-binding residues include Cys29, Cys32, Cys54, and Cys57. The disordered stretch occupies residues Val72–Ile110. The segment covering Pro85–Pro107 has biased composition (low complexity).

The protein localises to the nucleus. Functionally, transcription factor that binds specifically to a 5'-AA[AG]G-3' consensus core sequence. This Arabidopsis thaliana (Mouse-ear cress) protein is Dof zinc finger protein DOF1.4 (DOF1.4).